Consider the following 231-residue polypeptide: Phosphoglycolate phosphatase (231 aa).

Asp-9 acts as the Nucleophile in catalysis. Mg(2+) contacts are provided by Asp-9 and Asp-11. Lys-154 contacts substrate. Mg(2+)-binding residues include Asp-177 and Asp-181.

This sequence belongs to the archaeal SPP-like hydrolase family. Mg(2+) serves as cofactor.

It catalyses the reaction 2-phosphoglycolate + H2O = glycolate + phosphate. In terms of biological role, catalyzes the dephosphorylation of 2-phosphoglycolate. The protein is Phosphoglycolate phosphatase of Pyrococcus furiosus (strain ATCC 43587 / DSM 3638 / JCM 8422 / Vc1).